A 44-amino-acid chain; its full sequence is Photosystem I reaction center subunit IX (44 aa).

Residues 7 to 27 form a helical membrane-spanning segment; that stretch reads YLSTAPVLAILCVSFLAALLI.

It belongs to the PsaJ family.

The protein localises to the plastid. The protein resides in the chloroplast thylakoid membrane. Its function is as follows. May help in the organization of the PsaE and PsaF subunits. The protein is Photosystem I reaction center subunit IX of Pinus thunbergii (Japanese black pine).